The chain runs to 98 residues: Plastocyanin (98 aa).

Residues 1-98 (DVTVKLGADS…AGMKGTITVQ (98 aa)) form the Plastocyanin-like domain. Positions 38, 83, 86, and 91 each coordinate Cu cation.

The protein belongs to the plastocyanin family. Cu(2+) is required as a cofactor.

It is found in the plastid. Its subcellular location is the chloroplast thylakoid membrane. Participates in electron transfer between P700 and the cytochrome b6-f complex in photosystem I. The sequence is that of Plastocyanin (petE) from Scenedesmus fuscus (Green alga).